The sequence spans 494 residues: uncharacterized protein (494 aa).

VOC domains lie at 18-174 (FIDC…FINR) and 229-408 (SLDH…FGIL). Residues His232, His349, and Glu460 each contribute to the Fe cation site.

The protein belongs to the 4HPPD family. Fe cation serves as cofactor.

Its function is as follows. May have dioxygenase activity. This is an uncharacterized protein from Dictyostelium discoideum (Social amoeba).